A 77-amino-acid polypeptide reads, in one-letter code: Small ribosomal subunit protein uS4 (77 aa).

Residues proline 45 to glutamate 77 form a disordered region. Basic residues predominate over residues glycine 52–alanine 63.

The protein belongs to the universal ribosomal protein uS4 family.

The sequence is that of Small ribosomal subunit protein uS4 (RPS9) from Nicotiana tabacum (Common tobacco).